The chain runs to 455 residues: MHILVVGLDYKTAPVEIREQLSFEPSELGTAMSKLKEEKSILENIVISTCNRTEIYAVVDQLHTGRFYIKRFLADWFGLEKEDVSPYLKFYENDGAVEHLFRVACGLDSMVIGETQILGQVRSSFKVAQEEKTIGTVFNYLFKQAVTVAKRSHAETDIASNAVSVSYAAVELAKKIFGRLSDKHVLILGAGKMGELAAQNLQGQGIGQVTVINRTYEKAKELAGRFSGEPKSLNQLEKTLSEADILISSTGAKQFVITKEMVESANKKRKGRPLFMVDIAVPRDLDPAISEVEGAFLYDIDDLEGIVAANLKERRAVAEQVELLIEAEIVEFKQWLNTLGVVPVISALREKALTIQADTMQSIERKLPNLTHREMKLLNKHTKSIINQMLKDPILKAKEIAAEPNAEEKLLLFKEIFDLQVEDEEQKVEPVQVEQGSFQLFKPNMAQGFATVASE.

Substrate contacts are provided by residues 49 to 52, S109, 114 to 116, and Q120; these read TCNR and ETQ. The active-site Nucleophile is the C50. Residue 189 to 194 participates in NADP(+) binding; the sequence is GAGKMG.

Belongs to the glutamyl-tRNA reductase family. As to quaternary structure, homodimer.

The catalysed reaction is (S)-4-amino-5-oxopentanoate + tRNA(Glu) + NADP(+) = L-glutamyl-tRNA(Glu) + NADPH + H(+). It functions in the pathway porphyrin-containing compound metabolism; protoporphyrin-IX biosynthesis; 5-aminolevulinate from L-glutamyl-tRNA(Glu): step 1/2. In terms of biological role, catalyzes the NADPH-dependent reduction of glutamyl-tRNA(Glu) to glutamate 1-semialdehyde (GSA). This is Glutamyl-tRNA reductase from Bacillus pumilus (strain SAFR-032).